Consider the following 279-residue polypeptide: Complement component 1 Q subcomponent-binding protein, mitochondrial (279 aa).

The transit peptide at 1 to 71 (MLPLLRCVPR…PVPCACGCGA (71 aa)) directs the protein to the mitochondrion. A C1q binding region spans residues 74–91 (TEGDKAFVEFLTDEIKEE). N6-acetyllysine occurs at positions 89 and 92. The interval 134–162 (NNSIPPTFDGEEEPSQGQKAEEQEPELTS) is disordered. Residues 166 to 210 (FVVEVTKTDGKKTLVLDCHYPEDEIGHEDEAESDIFSIKEVSFQT) are interaction with MAVS. Tyr185 is subject to Phosphotyrosine. Residues Ser198 and Ser202 each carry the phosphoserine modification. At Thr211 the chain carries Phosphothreonine.

The protein belongs to the MAM33 family. As to quaternary structure, homotrimer; three monomers form a donut-shaped structure with an unusually asymmetric charge distribution on the surface. Interacts with CDK13, HRK, VTN, NFYB, ADRA1B, FOXC1, DDX21, DDX50, NCL, SRSF1 and SRSF9. Interacts with CD93; the association may represent a cell surface C1q receptor. Interacts with KRT1; the association represents a cell surface kininogen receptor. Interacts with CD209; the interaction is indicative for a C1q:C1QBP:CD209 signaling complex. Interacts with FBL and RRP1; the respective interactions with C1QBP are competitive. Probably associates with the mitoribosome. Interacts with MAVS; the interaction occurs upon viral transfection. Interacts with PPIF. Interacts with U2AF1L4. Interacts with PLEKHN1. Interacts with VGF-derived peptide TLQP-21. Interacts with MRE11 and RAD50; forming the MRC (MRE11-RAD50-C1QBP) complex that inhibits the activity of MRE11. In terms of tissue distribution, ubiquitous.

It localises to the mitochondrion matrix. The protein localises to the nucleus. Its subcellular location is the cell membrane. It is found in the secreted. The protein resides in the cytoplasm. It localises to the nucleolus. Functionally, multifunctional and multicompartmental protein involved in inflammation and infection processes, ribosome biogenesis, protein synthesis in mitochondria, regulation of apoptosis, transcriptional regulation and pre-mRNA splicing. At the cell surface is thought to act as an endothelial receptor for plasma proteins of the complement and kallikrein-kinin cascades. Putative receptor for C1q; specifically binds to the globular 'heads' of C1q thus inhibiting C1; may perform the receptor function through a complex with C1qR/CD93. In complex with cytokeratin-1/KRT1 is a high affinity receptor for kininogen-1/HMWK. Can also bind other plasma proteins, such as coagulation factor XII leading to its autoactivation. May function to bind initially fluid kininogen-1 to the cell membrane. The secreted form may enhance both extrinsic and intrinsic coagulation pathways. It is postulated that the cell surface form requires docking with transmembrane proteins for downstream signaling which might be specific for a cell-type or response. By acting as C1q receptor is involved in chemotaxis of immature dendritic cells and neutrophils and is proposed to signal through CD209/DC-SIGN on immature dendritic cells, through integrin alpha-4/beta-1 during trophoblast invasion of the decidua, and through integrin beta-1 during endothelial cell adhesion and spreading. Signaling involved in inhibition of innate immune response is implicating the PI3K-AKT/PKB pathway. Required for protein synthesis in mitochondria. In mitochondrial translation may be involved in formation of functional 55S mitoribosomes; the function seems to involve its RNA-binding activity. Acts as a RNA modification reader, which specifically recognizes and binds mitochondrial RNAs modified by C5-methylcytosine (m5C) in response to stress, and promotes recruitment of the mitochondrial degradosome complex, leading to their degradation. May be involved in the nucleolar ribosome maturation process; the function may involve the exchange of FBL for RRP1 in the association with pre-ribosome particles. Involved in regulation of RNA splicing by inhibiting the RNA-binding capacity of SRSF1 and its phosphorylation. Is required for the nuclear translocation of splicing factor U2AF1L4. Involved in regulation of CDKN2A- and HRK-mediated apoptosis. Stabilizes mitochondrial CDKN2A isoform smARF. May be involved in regulation of FOXC1 transcriptional activity and NFY/CCAAT-binding factor complex-mediated transcription. May play a role in antibacterial defense as it can bind to cell surface hyaluronan and inhibit Streptococcus pneumoniae hyaluronate lyase. May be involved in modulation of the immune response; ligation by HCV core protein is resulting in suppression of interleukin-12 production in monocyte-derived dendritic cells. Involved in regulation of antiviral response by inhibiting RIGI- and IFIH1-mediated signaling pathways probably involving its association with MAVS after viral infection. Acts as a regulator of DNA repair via homologous recombination by inhibiting the activity of MRE11: interacts with unphosphorylated MRE11 and RAD50 in absence of DNA damage, preventing formation and activity of the MRN complex. Following DNA damage, dissociates from phosphorylated MRE11, allowing formation of the MRN complex. The protein is Complement component 1 Q subcomponent-binding protein, mitochondrial (C1qbp) of Rattus norvegicus (Rat).